Reading from the N-terminus, the 277-residue chain is Glutamate racemase (277 aa).

Substrate contacts are provided by residues 9–10 and 41–42; these read DS and YG. The active-site Proton donor/acceptor is the C73. Position 74–75 (74–75) interacts with substrate; that stretch reads NT. The active-site Proton donor/acceptor is C183. 184–185 serves as a coordination point for substrate; sequence TH.

This sequence belongs to the aspartate/glutamate racemases family.

The enzyme catalyses L-glutamate = D-glutamate. Its pathway is cell wall biogenesis; peptidoglycan biosynthesis. Functionally, provides the (R)-glutamate required for cell wall biosynthesis. In Shewanella denitrificans (strain OS217 / ATCC BAA-1090 / DSM 15013), this protein is Glutamate racemase.